The sequence spans 264 residues: E3 ubiquitin-protein ligase MARCHF8 (264 aa).

The interval L15 to P47 is disordered. Positions G16–P47 are enriched in polar residues. An RING-CH-type zinc finger spans residues V45–E106. Positions 53, 56, 70, 72, 80, 83, 96, and 99 each coordinate Zn(2+). Transmembrane regions (helical) follow at residues C130–I150 and F170–V190.

The protein resides in the cytoplasmic vesicle membrane. Its subcellular location is the lysosome membrane. The protein localises to the early endosome membrane. It carries out the reaction S-ubiquitinyl-[E2 ubiquitin-conjugating enzyme]-L-cysteine + [acceptor protein]-L-lysine = [E2 ubiquitin-conjugating enzyme]-L-cysteine + N(6)-ubiquitinyl-[acceptor protein]-L-lysine.. The protein operates within protein modification; protein ubiquitination. In terms of biological role, E3 ubiquitin-protein ligase that mediates ubiquitination of cd86 and MHC class II proteins, such as hla-dr alpha and beta, and promotes their subsequent endocytosis and sorting to lysosomes via multivesicular bodies. This Xenopus laevis (African clawed frog) protein is E3 ubiquitin-protein ligase MARCHF8 (marchf8).